The sequence spans 199 residues: Probable nicotinate-nucleotide adenylyltransferase (199 aa).

It belongs to the NadD family.

The catalysed reaction is nicotinate beta-D-ribonucleotide + ATP + H(+) = deamido-NAD(+) + diphosphate. It participates in cofactor biosynthesis; NAD(+) biosynthesis; deamido-NAD(+) from nicotinate D-ribonucleotide: step 1/1. In terms of biological role, catalyzes the reversible adenylation of nicotinate mononucleotide (NaMN) to nicotinic acid adenine dinucleotide (NaAD). The chain is Probable nicotinate-nucleotide adenylyltransferase from Roseobacter denitrificans (strain ATCC 33942 / OCh 114) (Erythrobacter sp. (strain OCh 114)).